Consider the following 149-residue polypeptide: Putative pre-16S rRNA nuclease (149 aa).

It belongs to the YqgF nuclease family.

Its subcellular location is the cytoplasm. Its function is as follows. Could be a nuclease involved in processing of the 5'-end of pre-16S rRNA. The polypeptide is Putative pre-16S rRNA nuclease (Burkholderia ambifaria (strain MC40-6)).